We begin with the raw amino-acid sequence, 217 residues long: Probable transaldolase (217 aa).

K83 functions as the Schiff-base intermediate with substrate in the catalytic mechanism.

Belongs to the transaldolase family. Type 3B subfamily.

It localises to the cytoplasm. The enzyme catalyses D-sedoheptulose 7-phosphate + D-glyceraldehyde 3-phosphate = D-erythrose 4-phosphate + beta-D-fructose 6-phosphate. Its pathway is carbohydrate degradation; pentose phosphate pathway; D-glyceraldehyde 3-phosphate and beta-D-fructose 6-phosphate from D-ribose 5-phosphate and D-xylulose 5-phosphate (non-oxidative stage): step 2/3. Its function is as follows. Transaldolase is important for the balance of metabolites in the pentose-phosphate pathway. This chain is Probable transaldolase, found in Clostridium botulinum (strain Hall / ATCC 3502 / NCTC 13319 / Type A).